A 146-amino-acid chain; its full sequence is Leghemoglobin 49 (146 aa).

Residues 2-146 (GFTQQQEALV…LATAIKKAMS (145 aa)) enclose the Globin domain. Y24 and Y29 each carry nitrated tyrosine. A heme b-binding site is contributed by S44. S44 carries the post-translational modification Phosphoserine. O2 is bound at residue H61. Heme b is bound by residues H93 and K96. Nitrated tyrosine is present on Y134.

It belongs to the plant globin family. Monomer. Post-translationally, nitrated in effective nodules and particularly in hypoxic conditions; this mechanism may play a protective role in the symbiosis by buffering toxic peroxynitrite NO(2)(-). Nitration level decrease during nodule senescence. Phosphorylation at Ser-44 disrupts the molecular environment of its porphyrin ring oxygen binding pocket, thus leading to a reduced oxygen consumption and to the delivery of oxygen O(2) to symbiosomes. As to expression, accumulates in root nodules after inoculation by bacteria of the genus Rhizobium.

The protein localises to the cytoplasm. It is found in the cytosol. Its subcellular location is the nucleus. In terms of biological role, leghemoglobin that reversibly binds oxygen O(2) through a pentacoordinated heme iron. In root nodules, facilitates the diffusion of oxygen to the bacteroids while preventing the bacterial nitrogenase from being inactivated by buffering dioxygen, nitric oxide and carbon monoxide, and promoting the formation of reactive oxygen species (ROS, e.g. H(2)O(2)). This role is essential for symbiotic nitrogen fixation (SNF). This is Leghemoglobin 49 from Vicia faba (Broad bean).